The primary structure comprises 269 residues: Glutamate 5-kinase (269 aa).

Lys-14 serves as a coordination point for ATP. Substrate-binding residues include Ser-54, Asp-141, and Asn-157. Residues 177-178 (SD) and 219-225 (TGGMVTK) contribute to the ATP site.

Belongs to the glutamate 5-kinase family.

It localises to the cytoplasm. It catalyses the reaction L-glutamate + ATP = L-glutamyl 5-phosphate + ADP. Its pathway is amino-acid biosynthesis; L-proline biosynthesis; L-glutamate 5-semialdehyde from L-glutamate: step 1/2. In terms of biological role, catalyzes the transfer of a phosphate group to glutamate to form L-glutamate 5-phosphate. This Clostridium perfringens (strain 13 / Type A) protein is Glutamate 5-kinase.